We begin with the raw amino-acid sequence, 273 residues long: MKKFSLVAAALIAGVALNVNAATVATVNGKSISDAEVSEFFAPMLRGQDFKTLPDNQKKALIQQYIMQDLILQDAKKQNLEKDPLYTKELDRAKDAILVNVYQEKILNTIKIDAAKVKAFYDQNKDKYVKPARVQAKHILVATEKEAKDIINELKGLKGKELDAKFSELAKEKSIDPGSKNQGGELGWFDQSTMVKPFTDAAFALKNGTITTTPVKTNFGYHVILKENSQAKGQIKFDEVKQGIENGLKFEEFKKVINQKGQDLLNSAKVEYK.

An N-terminal signal peptide occupies residues 1 to 21 (MKKFSLVAAALIAGVALNVNA). The region spanning 131-228 (PARVQAKHIL…FGYHVILKEN (98 aa)) is the PpiC domain.

The catalysed reaction is [protein]-peptidylproline (omega=180) = [protein]-peptidylproline (omega=0). In Campylobacter jejuni subsp. jejuni serotype O:23/36 (strain 81-176), this protein is Putative peptidyl-prolyl cis-trans isomerase Cbf2 (cbf2).